Consider the following 123-residue polypeptide: Large ribosomal subunit protein uL29x (123 aa).

This sequence belongs to the universal ribosomal protein uL29 family.

In Arabidopsis thaliana (Mouse-ear cress), this protein is Large ribosomal subunit protein uL29x (RPL35C).